Consider the following 497-residue polypeptide: Interferon regulatory factor 5 (497 aa).

A Nuclear localization signal motif is present at residues 12–18 (PRRVRLK). The segment at residues 14–122 (RVRLKPWLVA…QPYKIYEVCS (109 aa)) is a DNA-binding region (IRF tryptophan pentad repeat). The interval 124–178 (GPAPTESQPTDDYVLGEEEEEEEEELQRMLPGLSITEPALPGPPNAPYSLPKEDT) is disordered. Residues 137 to 148 (VLGEEEEEEEEE) show a composition bias toward acidic residues. The Nuclear export signal motif lies at 149–159 (LQRMLPGLSIT). Residue Ser157 is modified to Phosphoserine; by TBK1. Ser300 is subject to Phosphoserine. Residues Lys410 and Lys411 each participate in a glycyl lysine isopeptide (Lys-Gly) (interchain with G-Cter in ubiquitin) cross-link. Ser430 carries the post-translational modification Phosphoserine. Position 434 is a phosphoserine; by IKKB (Ser434). Phosphoserine is present on residues Ser436 and Ser439. Ser445 is subject to Phosphoserine; by IKKB.

It belongs to the IRF family. As to quaternary structure, homodimer, when phosphorylated. Interacts with TASL (via pLxIS motif); interaction takes place downstream of TLR7, TLR8 or TLR9, leading to its activation. Interacts with MYD88 and TRAF6. In terms of processing, phosphorylation of serine and threonine residues by IKBKB in a C-terminal autoinhibitory region, stimulates dimerization, transport into the nucleus, assembly with the coactivator CBP/EP300 and initiation of transcription. Post-translationally, 'Lys-63'-linked polyubiquitination by TRAF6 is required for activation.

The protein resides in the cytoplasm. The protein localises to the nucleus. Its activity is regulated as follows. Maintained as a monomer in an autoinhibited state. Phosphorylation and activation follow the following steps: innate adapter protein TASL recruits IRF5, thereby licensing IRF5 for phosphorylation by IKBKB. Phosphorylated IRF5 dissociates from the adapter proteins, dimerizes, and then enters the nucleus to induce IFNs. Its function is as follows. Transcription factor that plays a critical role in innate immunity by activating expression of type I interferon (IFN) IFNA and INFB and inflammatory cytokines downstream of endolysosomal toll-like receptors TLR7, TLR8 and TLR9. Regulates the transcription of type I IFN genes (IFN-alpha and IFN-beta) and IFN-stimulated genes (ISG) by binding to an interferon-stimulated response element (ISRE) in their promoters. Can efficiently activate both the IFN-beta (IFNB) and the IFN-alpha (IFNA) genes and mediate their induction downstream of the TLR-activated, MyD88-dependent pathway. The polypeptide is Interferon regulatory factor 5 (Mus musculus (Mouse)).